Reading from the N-terminus, the 227-residue chain is Putative ankyrin repeat protein RF_0314 (227 aa).

ANK repeat units lie at residues 94–126, 130–164, and 168–199; these read NGCT…DPNI, DGNT…DIEL, and LGWT…DNDF.

This is Putative ankyrin repeat protein RF_0314 from Rickettsia felis (strain ATCC VR-1525 / URRWXCal2) (Rickettsia azadi).